Reading from the N-terminus, the 195-residue chain is Urease accessory protein UreG (195 aa).

9 to 16 (GPVGSGKT) is a binding site for GTP.

The protein belongs to the SIMIBI class G3E GTPase family. UreG subfamily. Homodimer. UreD, UreF and UreG form a complex that acts as a GTP-hydrolysis-dependent molecular chaperone, activating the urease apoprotein by helping to assemble the nickel containing metallocenter of UreC. The UreE protein probably delivers the nickel.

The protein localises to the cytoplasm. In terms of biological role, facilitates the functional incorporation of the urease nickel metallocenter. This process requires GTP hydrolysis, probably effectuated by UreG. The chain is Urease accessory protein UreG from Aliarcobacter butzleri (strain RM4018) (Arcobacter butzleri).